The sequence spans 320 residues: Cytochrome f (320 aa).

Residues 1–35 (MQTRNTFSWIKEEITRSISVSLMIYIITGASISNA) form the signal peptide. Positions 36, 56, 59, and 60 each coordinate heme. A helical membrane pass occupies residues 286 to 306 (VQGLLFFLASIVFAQIFLVLK).

The protein belongs to the cytochrome f family. The 4 large subunits of the cytochrome b6-f complex are cytochrome b6, subunit IV (17 kDa polypeptide, petD), cytochrome f and the Rieske protein, while the 4 small subunits are PetG, PetL, PetM and PetN. The complex functions as a dimer. The cofactor is heme.

The protein localises to the plastid. The protein resides in the chloroplast thylakoid membrane. Functionally, component of the cytochrome b6-f complex, which mediates electron transfer between photosystem II (PSII) and photosystem I (PSI), cyclic electron flow around PSI, and state transitions. The chain is Cytochrome f from Gossypium barbadense (Sea Island cotton).